We begin with the raw amino-acid sequence, 576 residues long: High-affinity choline transporter 1 (576 aa).

The chain crosses the membrane as a helical span at residues 6 to 26; sequence GIVAIVFFYVLILVVGIWAGR. Residues 27 to 51 lie on the Cytoplasmic side of the membrane; sequence KSKSSKELESEAGAATEEVMLAGRN. A helical membrane pass occupies residues 52-72; that stretch reads IGTLVGIFTMTATWVGGAYIN. Residues 73-82 lie on the Extracellular side of the membrane; the sequence is GTAEALYNGG. The helical transmembrane segment at 83–103 threads the bilayer; it reads LLGCQAPVGYAISLVMGGLLF. Residues 104-126 are Cytoplasmic-facing; it reads AKKMREEGYITMLDPFQHKYGQR. The chain crosses the membrane as a helical span at residues 127 to 147; sequence IGGLMYVPALLGETFWTAAIL. The Extracellular portion of the chain corresponds to 148–165; sequence SALGATLSVILGIDMNAS. Residues 166–186 form a helical membrane-spanning segment; the sequence is VTLSACIAVFYTFTGGYYAVA. The Cytoplasmic portion of the chain corresponds to 187 to 192; that stretch reads YTDVVQ. The chain crosses the membrane as a helical span at residues 193–213; it reads LFCIFVGLWVCVPAAMVHDGA. The Extracellular portion of the chain corresponds to 214-233; it reads KDISRNAGDWIGEIGGFKET. The chain crosses the membrane as a helical span at residues 234–254; that stretch reads SLWIDCMLLLVFGGIPWQVYF. At 255 to 270 the chain is on the cytoplasmic side; sequence QRVLSSKTAHGAQTLS. Residues 271–291 form a helical membrane-spanning segment; it reads FVAGVGCILMAIPPALIGAIA. Residues 292–319 are Extracellular-facing; sequence RNTDWRMTDYSPWNNGTKVESIPPDKRN. Asparagine 306 carries an N-linked (GlcNAc...) asparagine glycan. Residues 320–340 traverse the membrane as a helical segment; sequence MVVPLVFQYLTPRWVAFIGLG. The Cytoplasmic segment spans residues 341–378; the sequence is AVSAAVMSSADSSVLSAASMFAHNIWKLTIRPHASEKE. A helical membrane pass occupies residues 379–399; sequence VIIVMRIAIICVGIMATIMAL. Topologically, residues 400 to 408 are extracellular; it reads TIQSIYGLW. Residues 409 to 429 form a helical membrane-spanning segment; that stretch reads YLCADLVYVILFPQLLCVVYM. The Cytoplasmic segment spans residues 430-437; it reads PRSNTYGS. A helical transmembrane segment spans residues 438-458; sequence LAGYAVGLVLRLIGGEPLVSL. At 459–478 the chain is on the extracellular side; it reads PAFFHYPMYTDGVQYFPFRT. The helical transmembrane segment at 479-499 threads the bilayer; it reads TAMLSSMATIYIVSIQSEKLF. Residues 500–576 are Cytoplasmic-facing; it reads KSGRLSPEWD…DQSYYSTNSN (77 aa). Positions 541-576 are disordered; sequence APNGTPAPVHPNQQPSDENTLLHPYSDQSYYSTNSN. Residues 566 to 576 show a composition bias toward polar residues; it reads SDQSYYSTNSN.

Belongs to the sodium:solute symporter (SSF) (TC 2.A.21) family. Detected in the nervous system, including the nerve ring and cholinergic motor neurons of the ventral nerve cord.

Its subcellular location is the membrane. Its function is as follows. Imports choline from the extracellular space to the neuron with high affinity. Choline uptake is the rate-limiting step in acetylcholine synthesis. Sodium ion and chloride ion dependent. The sequence is that of High-affinity choline transporter 1 (cho-1) from Caenorhabditis elegans.